The following is an 849-amino-acid chain: Trehalose-phosphatase (849 aa).

Positions 1–558 are glycosyltransferase; that stretch reads MPSGAQGNTQ…VKALESHMTT (558 aa).

The protein in the N-terminal section; belongs to the glycosyltransferase 20 family. This sequence in the C-terminal section; belongs to the trehalose phosphatase family. The cofactor is Mg(2+).

It is found in the cytoplasm. Its subcellular location is the nucleus. The enzyme catalyses alpha,alpha-trehalose 6-phosphate + H2O = alpha,alpha-trehalose + phosphate. The protein operates within carbohydrate biosynthesis. Its function is as follows. Phosphatase catalytic subunit of the trehalose synthase complex that catalyzes the production of trehalose from glucose-6-phosphate and UDP-glucose in a two step process. The chain is Trehalose-phosphatase (tps2) from Schizosaccharomyces pombe (strain 972 / ATCC 24843) (Fission yeast).